A 542-amino-acid chain; its full sequence is GATA-type transcription factor sreA (542 aa).

Positions 1 to 10 (MLTLRSSSDT) are enriched in polar residues. The interval 1 to 172 (MLTLRSSSDT…SAQNASGCGS (172 aa)) is disordered. Basic and acidic residues predominate over residues 44 to 63 (ADLRPDSFDASRSPDGDKAS). 2 stretches are compositionally biased toward low complexity: residues 75–117 (SSDQ…PKAS) and 148–168 (SSTSDPRASPAASDASAQNAS). Residues 178–196 (CPGGGSCNGTGGAVGCDGC) form a cystein-rich region (CRR) region. The span at 210–223 (APSARQARASPSAQ) shows a compositional bias: low complexity. The interval 210 to 248 (APSARQARASPSAQTSEEQAQSGLDALDSASQDASGMPK) is disordered. The GATA-type zinc-finger motif lies at 250-274 (CQNCGTTLTPLWRRDDQGNTICNAC). Residues 289–300 (MKKTVIKRRKRV) are compositionally biased toward basic residues. Disordered stretches follow at residues 289–408 (MKKT…PATR) and 461–525 (SNAP…REAE). 2 stretches are compositionally biased toward polar residues: residues 311–320 (AGSSDNSSVS) and 369–387 (KPTQSTSSPGLNTLINHSP). Low complexity predominate over residues 396–407 (ESTSAESAPPAT). Residues 464–483 (PARSQTQTQPQPGTRSYSPN) show a composition bias toward polar residues. A coiled-coil region spans residues 510–542 (DKVKAARRAQLQREAENMREALRAKERELASLK).

It is found in the nucleus. Its function is as follows. GATA-type transcription repressor that regulates iron acquisition genes through specific binding the GATA sequence elements of target promoters. SreA targets include genes encoding a number of key iron-regulated factors such as the siderophore biosynthesis genes. Is dispensable for growth on keratin substrates. SreA represses the expression of hapX and the siderophore system during iron sufficient conditions by an iron-sensing mechanism, while hapX represses sreA and activates the siderophore system during iron-limiting conditions resulting in efficient iron uptake and inhibition of iron-consuming pathways. This is GATA-type transcription factor sreA from Arthroderma benhamiae (strain ATCC MYA-4681 / CBS 112371) (Trichophyton mentagrophytes).